Here is a 363-residue protein sequence, read N- to C-terminus: MNLFNSHLLSYMVPKNLNLNWNFGFILGILLVLQIISGLMLSFFYVPAKGMAFESTLAVMLNICFGWFVRLYHSFGVSFYFFFMFLHIMKGMWYSSNHLPWSWYSGVVIFVLSIATAFVGYVLPDGQMSFWGATVIGGLLKFFGKANVLIFGGQTVGPETLERFFSIHVILPVIILLVVIFHLYVLHRDGSSNPLAVIDMLAIFRFHPVVLFSDIRFIVIVILLIGVQSGYGFISIFQADPDNSILSDPLNTPAHIIPEWYLLLFYATLKVFPTKVAGLLAMAGMLELLVLLVESRYFKQTVSAMNYHRVWTTSSVPLVPVLFMLGSIGKMVVHVDLIAIGTCVVLSVVLFIYKLLDSARVRA.

4 consecutive transmembrane segments (helical) span residues 23-43 (FGFILGILLVLQIISGLMLSF), 67-89 (WFVRLYHSFGVSFYFFFMFLHIM), 102-122 (SWYSGVVIFVLSIATAFVGYV), and 164-184 (FFSIHVILPVIILLVVIFHLY). Heme b is bound by residues H73 and H87. Heme b-binding residues include H168 and H182. H187 serves as a coordination point for a ubiquinone. A run of 4 helical transmembrane segments spans residues 210–230 (VLFSDIRFIVIVILLIGVQSG), 271–291 (VFPTKVAGLLAMAGMLELLVL), 310–330 (VWTTSSVPLVPVLFMLGSIGK), and 332–352 (VVHVDLIAIGTCVVLSVVLFI).

The protein belongs to the cytochrome b family. The main subunits of complex b-c1 are: cytochrome b, cytochrome c1 and the Rieske protein. Heme b is required as a cofactor.

The protein resides in the mitochondrion inner membrane. Component of the ubiquinol-cytochrome c reductase complex (complex III or cytochrome b-c1 complex) that is part of the mitochondrial respiratory chain. The b-c1 complex mediates electron transfer from ubiquinol to cytochrome c. Contributes to the generation of a proton gradient across the mitochondrial membrane that is then used for ATP synthesis. The protein is Cytochrome b (MT-CYB) of Theileria annulata.